The following is a 219-amino-acid chain: MSSLLRKMASKKQRATEILLILKKLYPGATCSLDYQTPVQLLVATILSAQCTDERVNKVTPALFQRYPDANALAYGDRQEIEELIHSTGFFRNKAKNIQGACRKIVEEFDGEVPQRMEELLTLPGVARKTANVVLAHAFGILAGVTVDTHVKRLSQRLGLTKATDPIRIERDLMKLIPQPDWENFSIHIIYHGRAVCAARKPLCGECQLAHLCPSAQAS.

One can recognise a HhH domain in the interval 117 to 136 (MEELLTLPGVARKTANVVLA). [4Fe-4S] cluster is bound by residues C197, C204, C207, and C213.

The protein belongs to the Nth/MutY family. [4Fe-4S] cluster is required as a cofactor.

The enzyme catalyses 2'-deoxyribonucleotide-(2'-deoxyribose 5'-phosphate)-2'-deoxyribonucleotide-DNA = a 3'-end 2'-deoxyribonucleotide-(2,3-dehydro-2,3-deoxyribose 5'-phosphate)-DNA + a 5'-end 5'-phospho-2'-deoxyribonucleoside-DNA + H(+). In terms of biological role, DNA repair enzyme that has both DNA N-glycosylase activity and AP-lyase activity. The DNA N-glycosylase activity releases various damaged pyrimidines from DNA by cleaving the N-glycosidic bond, leaving an AP (apurinic/apyrimidinic) site. The AP-lyase activity cleaves the phosphodiester bond 3' to the AP site by a beta-elimination, leaving a 3'-terminal unsaturated sugar and a product with a terminal 5'-phosphate. This is Endonuclease III from Synechocystis sp. (strain ATCC 27184 / PCC 6803 / Kazusa).